Reading from the N-terminus, the 451-residue chain is Tubulin beta-1 chain (451 aa).

Residues 1–4 carry the MREI motif motif; sequence MREI. GTP contacts are provided by Q11, E69, S138, G142, T143, and G144. Residue E69 coordinates Mg(2+). A Phosphoserine; by CDK1 modification is found at S172. Residues N204 and N226 each coordinate GTP. Positions 432–451 are disordered; the sequence is LEEDEEVTEEAEMEPEDKGH. Residues 433 to 451 are compositionally biased toward acidic residues; the sequence is EEDEEVTEEAEMEPEDKGH. Residue E440 is modified to 5-glutamyl polyglutamate.

Belongs to the tubulin family. In terms of assembly, dimer of alpha and beta chains. A typical microtubule is a hollow water-filled tube with an outer diameter of 25 nm and an inner diameter of 15 nM. Alpha-beta heterodimers associate head-to-tail to form protofilaments running lengthwise along the microtubule wall with the beta-tubulin subunit facing the microtubule plus end conferring a structural polarity. Microtubules usually have 13 protofilaments but different protofilament numbers can be found in some organisms and specialized cells. Interacts with RANBP10. It depends on Mg(2+) as a cofactor. Post-translationally, some glutamate residues at the C-terminus are polyglutamylated, resulting in polyglutamate chains on the gamma-carboxyl group. Polyglutamylation plays a key role in microtubule severing by spastin (SPAST). SPAST preferentially recognizes and acts on microtubules decorated with short polyglutamate tails: severing activity by SPAST increases as the number of glutamates per tubulin rises from one to eight, but decreases beyond this glutamylation threshold. Glutamylation is also involved in cilia motility. In terms of processing, some glutamate residues at the C-terminus are monoglycylated but not polyglycylated due to the absence of functional TTLL10 in human. Monoglycylation is mainly limited to tubulin incorporated into cilia and flagella axonemes, which is required for their stability and maintenance. Flagella glycylation controls sperm motility. Both polyglutamylation and monoglycylation can coexist on the same protein on adjacent residues, and lowering glycylation levels increases polyglutamylation, and reciprocally. Phosphorylated on Ser-172 by CDK1 during the cell cycle, from metaphase to telophase, but not in interphase. This phosphorylation inhibits tubulin incorporation into microtubules. As to expression, hematopoietic cell-specific. Major isotype in leukocytes, where it represents 50% of all beta-tubulins.

It localises to the cytoplasm. It is found in the cytoskeleton. Its function is as follows. Tubulin is the major constituent of microtubules, a cylinder consisting of laterally associated linear protofilaments composed of alpha- and beta-tubulin heterodimers. Microtubules grow by the addition of GTP-tubulin dimers to the microtubule end, where a stabilizing cap forms. Below the cap, tubulin dimers are in GDP-bound state, owing to GTPase activity of alpha-tubulin. This is Tubulin beta-1 chain (TUBB1) from Homo sapiens (Human).